The chain runs to 129 residues: Small ribosomal subunit protein uS9 (129 aa).

This sequence belongs to the universal ribosomal protein uS9 family.

The protein is Small ribosomal subunit protein uS9 (rpsI) of Treponema pallidum (strain Nichols).